Here is a 181-residue protein sequence, read N- to C-terminus: Acireductone dioxygenase (181 aa).

Positions 97, 99, 103, and 141 each coordinate Fe(2+). Positions 97, 99, 103, and 141 each coordinate Ni(2+).

This sequence belongs to the acireductone dioxygenase (ARD) family. As to quaternary structure, monomer. It depends on Fe(2+) as a cofactor. Requires Ni(2+) as cofactor.

The enzyme catalyses 1,2-dihydroxy-5-(methylsulfanyl)pent-1-en-3-one + O2 = 3-(methylsulfanyl)propanoate + CO + formate + 2 H(+). It carries out the reaction 1,2-dihydroxy-5-(methylsulfanyl)pent-1-en-3-one + O2 = 4-methylsulfanyl-2-oxobutanoate + formate + 2 H(+). Its pathway is amino-acid biosynthesis; L-methionine biosynthesis via salvage pathway; L-methionine from S-methyl-5-thio-alpha-D-ribose 1-phosphate: step 5/6. In terms of biological role, catalyzes 2 different reactions between oxygen and the acireductone 1,2-dihydroxy-3-keto-5-methylthiopentene (DHK-MTPene) depending upon the metal bound in the active site. Fe-containing acireductone dioxygenase (Fe-ARD) produces formate and 2-keto-4-methylthiobutyrate (KMTB), the alpha-ketoacid precursor of methionine in the methionine recycle pathway. Ni-containing acireductone dioxygenase (Ni-ARD) produces methylthiopropionate, carbon monoxide and formate, and does not lie on the methionine recycle pathway. This is Acireductone dioxygenase from Pseudomonas fluorescens (strain ATCC BAA-477 / NRRL B-23932 / Pf-5).